We begin with the raw amino-acid sequence, 323 residues long: tRNA dimethylallyltransferase (323 aa).

Residue glycine 12–threonine 19 coordinates ATP. Threonine 14–threonine 19 is a substrate binding site. Interaction with substrate tRNA stretches follow at residues aspartate 37–leucine 40 and glutamine 161–arginine 165.

The protein belongs to the IPP transferase family. As to quaternary structure, monomer. Mg(2+) serves as cofactor.

It catalyses the reaction adenosine(37) in tRNA + dimethylallyl diphosphate = N(6)-dimethylallyladenosine(37) in tRNA + diphosphate. In terms of biological role, catalyzes the transfer of a dimethylallyl group onto the adenine at position 37 in tRNAs that read codons beginning with uridine, leading to the formation of N6-(dimethylallyl)adenosine (i(6)A). The chain is tRNA dimethylallyltransferase from Pseudomonas entomophila (strain L48).